The chain runs to 301 residues: UDP-N-acetylenolpyruvoylglucosamine reductase (301 aa).

Residues 27-194 (RVGGPADVVF…LDAIFEGTPD (168 aa)) form the FAD-binding PCMH-type domain. Arg172 is a catalytic residue. Residue Ser223 is the Proton donor of the active site. Residue Glu293 is part of the active site.

Belongs to the MurB family. FAD is required as a cofactor.

It localises to the cytoplasm. It catalyses the reaction UDP-N-acetyl-alpha-D-muramate + NADP(+) = UDP-N-acetyl-3-O-(1-carboxyvinyl)-alpha-D-glucosamine + NADPH + H(+). The protein operates within cell wall biogenesis; peptidoglycan biosynthesis. Its function is as follows. Cell wall formation. This Caulobacter vibrioides (strain NA1000 / CB15N) (Caulobacter crescentus) protein is UDP-N-acetylenolpyruvoylglucosamine reductase.